The primary structure comprises 599 residues: RING finger protein unkempt (599 aa).

5 C3H1-type zinc fingers span residues 71-100 (YSAD…HRTA), 111-141 (YYKT…HGMQ), 194-220 (NYKT…HNSK), 230-264 (KYRS…HTRT), and 272-300 (IYKS…HVEP). Ser411 carries the post-translational modification Phosphoserine. The segment at 556-591 (CMKCEENNRTVTLEPCNHLSICNTCAESVTECPYCQ) adopts an RING-type zinc-finger fold.

Belongs to the unkempt family. As to expression, ubiquitous in most somatic tissues from syncytial embryo through to embryo stage 15. Expression becomes restricted predominantly to the CNS at stages 16 and 17.

It localises to the cytoplasm. Essential for late larval/early pupal development. The chain is RING finger protein unkempt (unk) from Drosophila melanogaster (Fruit fly).